The sequence spans 267 residues: Phosphate import ATP-binding protein PstB 2 (267 aa).

One can recognise an ABC transporter domain in the interval 21–262 (LSTKDVHVYY…AKLQSTNDYV (242 aa)). 53–60 (GPSGSGKS) provides a ligand contact to ATP.

Belongs to the ABC transporter superfamily. Phosphate importer (TC 3.A.1.7) family. The complex is composed of two ATP-binding proteins (PstB), two transmembrane proteins (PstC and PstA) and a solute-binding protein (PstS).

The protein resides in the cell membrane. The catalysed reaction is phosphate(out) + ATP + H2O = ADP + 2 phosphate(in) + H(+). Part of the ABC transporter complex PstSACB involved in phosphate import. Responsible for energy coupling to the transport system. The sequence is that of Phosphate import ATP-binding protein PstB 2 from Streptococcus pneumoniae (strain ATCC BAA-255 / R6).